The sequence spans 301 residues: MTGKEENKQQQHVNFPWKRLVAGAVAGTADVWACHPLDRIKTQLQNNPGKSIVGTFGDIVSKGKGFTGGVNALYEGILPMTAEAIFKVGIRYFAFSWFTEQYKTTVYKGETLNKKQQFGANLLGGAFAGTIESFVVVIPCELLKVRHMTQEHNKSFGTVFRDVLREEGFQGLYKGGSATLLRQITNHMIRFPTFYAISDYLKGGDHSVHLPVWQNLSAGAIAGTASTLFNNPLDTIKTRMQKQGQNQTTMQVVRGIYQETGVKGYWAGVIPRILRVAPGQAITWAVVELVMGILEPSSKKH.

At Met1–Arg19 the chain is on the mitochondrial intermembrane side. 3 Solcar repeats span residues Asn14–Gln101, Gln116–Tyr200, and Leu210–Ile293. The chain crosses the membrane as a helical span at residues Leu20–Leu37. The Mitochondrial matrix segment spans residues Asp38–Gly65. The chain crosses the membrane as a helical span at residues Phe66–Phe86. The Mitochondrial intermembrane segment spans residues Lys87–Gln117. Residues Phe118–Ile138 form a helical membrane-spanning segment. Topologically, residues Pro139–Lys174 are mitochondrial matrix. The chain crosses the membrane as a helical span at residues Gly175–Phe191. The Mitochondrial intermembrane portion of the chain corresponds to Pro192–Val212. The helical transmembrane segment at Trp213–Phe229 threads the bilayer. Residues Asn230–Arg275 lie on the Mitochondrial matrix side of the membrane. Residues Val276–Pro296 traverse the membrane as a helical segment. At Ser297–His301 the chain is on the mitochondrial intermembrane side.

The protein belongs to the mitochondrial carrier (TC 2.A.29) family.

It localises to the mitochondrion inner membrane. In terms of biological role, mitochondrial solute carriers shuttle metabolites, nucleotides, and cofactors through the mitochondrial inner membrane. This chain is Mitochondrial substrate carrier family protein Z (mcfZ), found in Dictyostelium discoideum (Social amoeba).